A 51-amino-acid chain; its full sequence is Large ribosomal subunit protein eL40 (51 aa).

Residues Cys-17, Cys-20, Cys-31, and Cys-34 each coordinate Zn(2+).

It belongs to the eukaryotic ribosomal protein eL40 family. As to quaternary structure, part of the 50S ribosomal subunit. It depends on Zn(2+) as a cofactor.

The polypeptide is Large ribosomal subunit protein eL40 (Thermococcus kodakarensis (strain ATCC BAA-918 / JCM 12380 / KOD1) (Pyrococcus kodakaraensis (strain KOD1))).